A 417-amino-acid polypeptide reads, in one-letter code: Carbohydrate sulfotransferase 8 (417 aa).

The Cytoplasmic portion of the chain corresponds to 1–10; it reads MTPRLGTMRL. Residues 11 to 31 form a helical; Signal-anchor for type II membrane protein membrane-spanning segment; the sequence is ACMFSSILLFGAAGLLLFISL. The Lumenal portion of the chain corresponds to 32–417; that stretch reads QDPIELSPQQ…NYSKPFSDLY (386 aa). The interval 47 to 101 is disordered; sequence FSIRPQQPQHDSHLRISTEKGTRDSPSGSPRGLQLQAPDQPRPHPKAAGSPLRLR. Positions 56–69 are enriched in basic and acidic residues; it reads HDSHLRISTEKGTR. N121 and N122 each carry an N-linked (GlcNAc...) asparagine glycan. 3'-phosphoadenylyl sulfate contacts are provided by residues 191 to 197 and 251 to 259; these read PKAGCSN and REPFERLVS. 3 N-linked (GlcNAc...) asparagine glycosylation sites follow: N287, N360, and N408.

This sequence belongs to the sulfotransferase 2 family. Strongly expressed in brain. Weakly expressed in lung and kidney. Weakly expressed in pituitary.

Its subcellular location is the golgi apparatus membrane. In terms of biological role, catalyzes the transfer of sulfate to position 4 of non-reducing N-acetylgalactosamine (GalNAc) residues in both N-glycans and O-glycans. Required for biosynthesis of glycoprotein hormones lutropin and thyrotropin, by mediating sulfation of their carbohydrate structures. Only active against terminal GalNAcbeta1,GalNAcbeta. Not active toward chondroitin. In Mus musculus (Mouse), this protein is Carbohydrate sulfotransferase 8 (Chst8).